Consider the following 644-residue polypeptide: MPEPHAVLYVTNELSHIVKNGFLPIWKLTGDESLNDLWLENGKYATDVYAYGDVSKWTIRQLRGHGFIFISTHKNVQLADIIKTVDVRIPREVARSHDMKAFENEIGRRRIRMRKGFGDALRNYAFKMAIEFHGSEAETLNDANPRLHKIYGMPEMPPLYMEYAEIGTRFDDEPTDEKLVSMLDYIVYSAEEVHYVGCGDLRTLMQFKKRSPGRFRRVLWHVYDPIAPECSDPNVIVHNIMVDSKKNILKHMNFLKRVERLFIWDVSSDRSQMNDHEWETTRFAEDRLGEEIAYEMGGAFSSALIKHRIPNSKDEYHCISTYLFPQPGADADMYELRNFMRLRGYSHVDRHMHPDASVTKVVSRDVRKMVELYHGRDRGRFLKKRLFEHLHIVRKNGLLHESDEPRADLFYLTNRCNMGLEPSIYEVMKKSVIATAWVGRAPLYDYDDFALPRSTVMLNGSYRDIRILDGNGAILFLMWRYPDIVKKDLTYDPAWAMNFAVSLKEPIPDPPVPDISLCRFIGLRVESSVLRVRNPTLHETADELKRMGLDLSGHLYVTLMSGAYVTDLFWWFKMILDWSAQNKEQKLRDLKRSAAEVIEWKEQMAERPWHVRNDLIRALREYKRKMGMREGASIDSWLELLRHL.

The protein belongs to the orbivirus VP4 family.

It localises to the virion. In terms of biological role, the VP4 protein is one of the five proteins (with VP1, VP3, VP6 and VP7) which form the inner capsid of the virus. This chain is Core protein VP4 (Segment-4), found in Bluetongue virus 11 (isolate USA) (BTV 11).